Reading from the N-terminus, the 651-residue chain is Polyadenylate-binding protein 1 (651 aa).

A compositionally biased stretch (low complexity) spans 1–27; the sequence is MSSTESPVPAAAAPAEAVPASTPAPAA. A disordered region spans residues 1-42; sequence MSSTESPVPAAAAPAEAVPASTPAPAAEQPAVGNGEQRNNAD. RRM domains are found at residues 47-125, 135-211, 227-304, and 330-407; these read TSLY…WSQR, GNIF…HHIP, TNVY…RAQK, and VNLY…LAQR. Disordered regions lie at residues 481–554 and 632–651; these read QPGQ…EADQ and QNDS…KTEA. A compositionally biased stretch (pro residues) spans 529–540; that stretch reads AGQPVPGQPMPR. The PABC domain occupies 555–632; sequence PGALTAAALA…ALEVLKEYQQ (78 aa). Low complexity predominate over residues 636 to 651; the sequence is AGAEAEANAEAPKTEA.

Belongs to the polyadenylate-binding protein type-1 family. Part of large ribonucleoprotein complexes (mRNPs) containing RNA-binding proteins RRM4 and PAB1, endosome-binding protein UPA1, core scaffold protein UPA2 and associated factor GRP1. Interacts (via PABC domain) with UPA1 (via PAM2 domain). Interacts (via PABC domain) with UPA2 (via PAM2 domains).

The protein localises to the cytoplasm. It is found in the cytoskeleton. The protein resides in the endosome. In terms of biological role, RNA-binding protein involved in the formation of polar-growing hyphae which is essential for infection by the plant pathogen. Component of endosomal mRNA transport that regulates polarity of the infectious hyphae by transporting a broad spectrum of cargo mRNAs from the nucleus to cell poles. This chain is Polyadenylate-binding protein 1, found in Mycosarcoma maydis (Corn smut fungus).